The sequence spans 122 residues: Large ribosomal subunit protein uL14 (122 aa).

The protein belongs to the universal ribosomal protein uL14 family. Part of the 50S ribosomal subunit. Forms a cluster with proteins L3 and L19. In the 70S ribosome, L14 and L19 interact and together make contacts with the 16S rRNA in bridges B5 and B8.

Its function is as follows. Binds to 23S rRNA. Forms part of two intersubunit bridges in the 70S ribosome. The chain is Large ribosomal subunit protein uL14 from Burkholderia vietnamiensis (strain G4 / LMG 22486) (Burkholderia cepacia (strain R1808)).